We begin with the raw amino-acid sequence, 377 residues long: Glutamate 5-kinase (377 aa).

Position 22 (Lys22) interacts with ATP. 3 residues coordinate substrate: Ser62, Asp149, and Asn161. ATP is bound by residues 181–182 (TD) and 223–229 (TGGMVTK). Positions 285–363 (RGTIVVDAGA…AQLKRFLGPQ (79 aa)) constitute a PUA domain.

It belongs to the glutamate 5-kinase family.

It localises to the cytoplasm. It carries out the reaction L-glutamate + ATP = L-glutamyl 5-phosphate + ADP. The protein operates within amino-acid biosynthesis; L-proline biosynthesis; L-glutamate 5-semialdehyde from L-glutamate: step 1/2. In terms of biological role, catalyzes the transfer of a phosphate group to glutamate to form L-glutamate 5-phosphate. This chain is Glutamate 5-kinase, found in Bifidobacterium longum (strain DJO10A).